The chain runs to 211 residues: ATP phosphoribosyltransferase (211 aa).

The protein belongs to the ATP phosphoribosyltransferase family. Short subfamily. As to quaternary structure, heteromultimer composed of HisG and HisZ subunits.

The protein resides in the cytoplasm. The enzyme catalyses 1-(5-phospho-beta-D-ribosyl)-ATP + diphosphate = 5-phospho-alpha-D-ribose 1-diphosphate + ATP. It functions in the pathway amino-acid biosynthesis; L-histidine biosynthesis; L-histidine from 5-phospho-alpha-D-ribose 1-diphosphate: step 1/9. Catalyzes the condensation of ATP and 5-phosphoribose 1-diphosphate to form N'-(5'-phosphoribosyl)-ATP (PR-ATP). Has a crucial role in the pathway because the rate of histidine biosynthesis seems to be controlled primarily by regulation of HisG enzymatic activity. The protein is ATP phosphoribosyltransferase of Bacillus mycoides (strain KBAB4) (Bacillus weihenstephanensis).